Here is an 880-residue protein sequence, read N- to C-terminus: Interference hedgehog (880 aa).

The N-terminal stretch at 1-20 (MPSIVSSLLLVVLLTSPLGA) is a signal peptide. Over 21–703 (IPVLYPSPPP…SHNETFSMSP (683 aa)) the chain is Extracellular. Ig-like C2-type domains lie at 37–142 (PGVR…TARL), 154–235 (PVTS…STSS), 251–339 (PYLL…FIQV), and 345–432 (PQIV…LQVT). Cystine bridges form between cysteine 60–cysteine 126, cysteine 172–cysteine 219, cysteine 275–cysteine 323, and cysteine 366–cysteine 414. N-linked (GlcNAc...) asparagine glycosylation is found at asparagine 79, asparagine 102, and asparagine 208. The segment at 435–468 (PIHSESTQQSDHNHSKANRGRRPAQMIPPSAPNV) is disordered. Asparagine 447 and asparagine 467 each carry an N-linked (GlcNAc...) asparagine glycan. Fibronectin type-III domains follow at residues 462 to 570 (PPSA…LQPG) and 578 to 673 (VPEM…TQRP). The heparin site is built by arginine 498, lysine 504, lysine 506, and arginine 544. An N-linked (GlcNAc...) asparagine glycan is attached at asparagine 560. A disordered region spans residues 665 to 699 (LKQGRTQRPMVSTTEEATLQTGVRDTTTPSHNETF). Residues 668–699 (GRTQRPMVSTTEEATLQTGVRDTTTPSHNETF) show a composition bias toward polar residues. The N-linked (GlcNAc...) asparagine glycan is linked to asparagine 696. Residues 704–724 (IVTGTIGGGAVLILFVVTTCL) traverse the membrane as a helical segment. Over 725 to 880 (CMWRRRNSRA…SSGSLNSVGV (156 aa)) the chain is Cytoplasmic. The disordered stretch occupies residues 797–880 (YFQRQPTYDY…SSGSLNSVGV (84 aa)). 2 stretches are compositionally biased toward low complexity: residues 827 to 839 (RAGS…NNLN) and 864 to 880 (SSRS…SVGV).

Belongs to the immunoglobulin superfamily. IHOG family. Homodimer. Heterotetramer; 2 iHog chains bind 2 hh chains when facilitated by heparin, heparin is required to promote high-affinity interactions between hh and iHog.

Its subcellular location is the membrane. Its function is as follows. Mediates response to the active Hedgehog (Hh) protein signal in embryos, functioning upstream or at the level of patched (ptc). This Drosophila ananassae (Fruit fly) protein is Interference hedgehog.